Reading from the N-terminus, the 369-residue chain is MQQLPIEKYDELLAEKCRKLTALLAPFDAPALTVFPSPTQHFRMRAEFRLWHDYSENRGGNLYHIMFDKTTKQRYRVDQFPVASQLINRMMATILPLLKEQDVLSRKLFQIDYLSTLSEQIIVSLLYHKTLTDEWQEAAQALKVRLRNLGFSVQIIGRATKQKICLDQDFVDEELSVGDKKYVYRQVENSFTQPNAALNCKMLEWAIDCTRDSQGDLLELYCGNGNFSIALAQNFRKVLATEIAKPSVAAAQFNIAANQVDNLQIIRMSAEEFTQAVNGVRAFNRLKGIDLQAYECHTIFVDPPRAGLDSDTVKLVQKYDRILYISCNPQTLCENLQILSQTHRIERAALFDQFPYTEHMEAGVWLMRK.

S-adenosyl-L-methionine-binding residues include glutamine 193, tyrosine 221, asparagine 226, glutamate 242, and aspartate 302. The active-site Nucleophile is the cysteine 327. Glutamate 361 acts as the Proton acceptor in catalysis.

This sequence belongs to the class I-like SAM-binding methyltransferase superfamily. RNA M5U methyltransferase family. TrmA subfamily.

It catalyses the reaction uridine(54) in tRNA + S-adenosyl-L-methionine = 5-methyluridine(54) in tRNA + S-adenosyl-L-homocysteine + H(+). It carries out the reaction uridine(341) in tmRNA + S-adenosyl-L-methionine = 5-methyluridine(341) in tmRNA + S-adenosyl-L-homocysteine + H(+). In terms of biological role, dual-specificity methyltransferase that catalyzes the formation of 5-methyluridine at position 54 (m5U54) in all tRNAs, and that of position 341 (m5U341) in tmRNA (transfer-mRNA). This is tRNA/tmRNA (uracil-C(5))-methyltransferase from Actinobacillus succinogenes (strain ATCC 55618 / DSM 22257 / CCUG 43843 / 130Z).